Here is a 317-residue protein sequence, read N- to C-terminus: Acetyl-coenzyme A carboxylase carboxyl transferase subunit beta (317 aa).

The CoA carboxyltransferase N-terminal domain occupies 30–299 (LWTKCVACTA…VLPPLNVREK (270 aa)). Zn(2+) contacts are provided by Cys34, Cys37, Cys53, and Cys56. The C4-type zinc finger occupies 34 to 56 (CVACTALTYTKDLQANQLVCTEC).

This sequence belongs to the AccD/PCCB family. As to quaternary structure, acetyl-CoA carboxylase is a heterohexamer composed of biotin carboxyl carrier protein (AccB), biotin carboxylase (AccC) and two subunits each of ACCase subunit alpha (AccA) and ACCase subunit beta (AccD). The cofactor is Zn(2+).

It localises to the cytoplasm. It catalyses the reaction N(6)-carboxybiotinyl-L-lysyl-[protein] + acetyl-CoA = N(6)-biotinyl-L-lysyl-[protein] + malonyl-CoA. The protein operates within lipid metabolism; malonyl-CoA biosynthesis; malonyl-CoA from acetyl-CoA: step 1/1. In terms of biological role, component of the acetyl coenzyme A carboxylase (ACC) complex. Biotin carboxylase (BC) catalyzes the carboxylation of biotin on its carrier protein (BCCP) and then the CO(2) group is transferred by the transcarboxylase to acetyl-CoA to form malonyl-CoA. This is Acetyl-coenzyme A carboxylase carboxyl transferase subunit beta from Crocosphaera subtropica (strain ATCC 51142 / BH68) (Cyanothece sp. (strain ATCC 51142)).